A 209-amino-acid chain; its full sequence is Large ribosomal subunit protein uL4 (209 aa).

Residues 45–80 form a disordered region; that stretch reads RQGTHKAKERSELSGSTRKLIRQKGSGGARRGDINS.

It belongs to the universal ribosomal protein uL4 family. In terms of assembly, part of the 50S ribosomal subunit.

In terms of biological role, one of the primary rRNA binding proteins, this protein initially binds near the 5'-end of the 23S rRNA. It is important during the early stages of 50S assembly. It makes multiple contacts with different domains of the 23S rRNA in the assembled 50S subunit and ribosome. Its function is as follows. Forms part of the polypeptide exit tunnel. In Porphyromonas gingivalis (strain ATCC BAA-308 / W83), this protein is Large ribosomal subunit protein uL4.